A 209-amino-acid polypeptide reads, in one-letter code: Ribosomal RNA large subunit methyltransferase E (209 aa).

5 residues coordinate S-adenosyl-L-methionine: Gly-63, Trp-65, Asp-83, Asp-99, and Asp-124. Residue Lys-164 is the Proton acceptor of the active site.

The protein belongs to the class I-like SAM-binding methyltransferase superfamily. RNA methyltransferase RlmE family.

The protein localises to the cytoplasm. It catalyses the reaction uridine(2552) in 23S rRNA + S-adenosyl-L-methionine = 2'-O-methyluridine(2552) in 23S rRNA + S-adenosyl-L-homocysteine + H(+). Specifically methylates the uridine in position 2552 of 23S rRNA at the 2'-O position of the ribose in the fully assembled 50S ribosomal subunit. This is Ribosomal RNA large subunit methyltransferase E from Shewanella sp. (strain MR-7).